Consider the following 201-residue polypeptide: Small ribosomal subunit protein uS4 (201 aa).

A disordered region spans residues 1–46 (MARYTGPRSRISRRFGEPVMGDSKALQKKNYAPGMHGRNKKRKQSE). The 60-residue stretch at 92-151 (ARLDNTVYRLGIASSRRAARQLVIHKHIVVNGDVVNIPSYQLKPGDQLGVREKSKSIEAI) folds into the S4 RNA-binding domain.

Belongs to the universal ribosomal protein uS4 family. As to quaternary structure, part of the 30S ribosomal subunit. Contacts protein S5. The interaction surface between S4 and S5 is involved in control of translational fidelity.

Its function is as follows. One of the primary rRNA binding proteins, it binds directly to 16S rRNA where it nucleates assembly of the body of the 30S subunit. With S5 and S12 plays an important role in translational accuracy. This chain is Small ribosomal subunit protein uS4, found in Cytophaga hutchinsonii (strain ATCC 33406 / DSM 1761 / CIP 103989 / NBRC 15051 / NCIMB 9469 / D465).